A 142-amino-acid polypeptide reads, in one-letter code: Hemoglobin subunit alpha-A (142 aa).

The Globin domain occupies 2–142 (VLSAADKTNV…VGAVLTAKYR (141 aa)). His-59 contributes to the O2 binding site. Position 88 (His-88) interacts with heme b.

The protein belongs to the globin family. As to quaternary structure, heterotetramer of two alpha chains and two beta chains. In terms of tissue distribution, red blood cells.

Its function is as follows. Involved in oxygen transport from the lung to the various peripheral tissues. In Cairina moschata (Muscovy duck), this protein is Hemoglobin subunit alpha-A (HBAA).